The following is a 347-amino-acid chain: MSKKIKVGIVGATGYTGVELLRLLAAHPDVEVAAVTSRSEAGTAVADYFPSLRGVYGLAFQTPDEAGLEQCDIVFFATPNGIAMKDAPRLIEQGVRVIDLSADFRIRDIPTWEHWYGMTHAAPDLVSQAVYGLSELNREAVAQARLVANPGCYPTCVSLPLVPLLRQCRLKPGMPLIADCKSGVSGAGRKGNVGSLLCEVGDNFKAYGIAGHRHLPEIRQTIAGLQDGIAEGFVFTPHLAPMIRGMHATVYLHLSDGICPETILRDYYRDSLFVDILPAGSTPETRSVRGANLCRISIQQAAQSDVWVVLSVIDNLVKGAAGQAVQNMNIMFGLKETHGLGAIPLLP.

The active site involves Cys152.

Belongs to the NAGSA dehydrogenase family. Type 1 subfamily.

It is found in the cytoplasm. The catalysed reaction is N-acetyl-L-glutamate 5-semialdehyde + phosphate + NADP(+) = N-acetyl-L-glutamyl 5-phosphate + NADPH + H(+). It functions in the pathway amino-acid biosynthesis; L-arginine biosynthesis; N(2)-acetyl-L-ornithine from L-glutamate: step 3/4. Its function is as follows. Catalyzes the NADPH-dependent reduction of N-acetyl-5-glutamyl phosphate to yield N-acetyl-L-glutamate 5-semialdehyde. This chain is N-acetyl-gamma-glutamyl-phosphate reductase, found in Neisseria meningitidis serogroup A / serotype 4A (strain DSM 15465 / Z2491).